The chain runs to 257 residues: Phosphonates import ATP-binding protein PhnC (257 aa).

In terms of domain architecture, ABC transporter spans 2–246 (IEFRNVSKVY…KFAEIYGDVA (245 aa)). ATP is bound at residue 35–42 (GLSGAGKS).

It belongs to the ABC transporter superfamily. Phosphonates importer (TC 3.A.1.9.1) family. The complex is composed of two ATP-binding proteins (PhnC), two transmembrane proteins (PhnE) and a solute-binding protein (PhnD).

The protein localises to the cell membrane. The enzyme catalyses phosphonate(out) + ATP + H2O = phosphonate(in) + ADP + phosphate + H(+). Its function is as follows. Part of the ABC transporter complex PhnCDE involved in phosphonates import. Responsible for energy coupling to the transport system. This Bacillus thuringiensis subsp. konkukian (strain 97-27) protein is Phosphonates import ATP-binding protein PhnC.